The chain runs to 358 residues: Chorismate synthase (358 aa).

The interval 39-61 (ADIQPFLDKRRPGQSRHTTQRQE) is disordered. Residues arginine 48 and arginine 54 each contribute to the NADP(+) site. FMN contacts are provided by residues 125-127 (RSS), 237-238 (NA), glycine 284, 299-303 (KPTSS), and arginine 325.

Belongs to the chorismate synthase family. In terms of assembly, homotetramer. FMNH2 is required as a cofactor.

The catalysed reaction is 5-O-(1-carboxyvinyl)-3-phosphoshikimate = chorismate + phosphate. Its pathway is metabolic intermediate biosynthesis; chorismate biosynthesis; chorismate from D-erythrose 4-phosphate and phosphoenolpyruvate: step 7/7. Catalyzes the anti-1,4-elimination of the C-3 phosphate and the C-6 proR hydrogen from 5-enolpyruvylshikimate-3-phosphate (EPSP) to yield chorismate, which is the branch point compound that serves as the starting substrate for the three terminal pathways of aromatic amino acid biosynthesis. This reaction introduces a second double bond into the aromatic ring system. The polypeptide is Chorismate synthase (Sphingopyxis alaskensis (strain DSM 13593 / LMG 18877 / RB2256) (Sphingomonas alaskensis)).